Here is a 213-residue protein sequence, read N- to C-terminus: mRNA-decapping protein D9 (213 aa).

The Nudix hydrolase domain occupies 30–209; it reads KDTHVFAACI…EYLSYIYNML (180 aa). A Nudix box motif is present at residues 111–132; that stretch reads GKLDKKESIKDCLRRELKEESD. Position 117 (E117) interacts with Mg(2+). E126 (nucleophile) is an active-site residue. Mg(2+)-binding residues include E130 and D151.

Belongs to the Nudix hydrolase family. Mg(2+) serves as cofactor. It depends on Mn(2+) as a cofactor.

Functionally, decapping enzyme required for the removal of the 5'-end m7GpppN cap tethered to viral and host mRNAs to allow their decay in cells. May therefore accelerate viral and cellular mRNA turnover to eliminate competing host mRNAs and allow stage-specific synthesis of viral proteins. Acceleration of the turnover of cellular transcripts may even promote the shutoff of host protein synthesis. Does not cleave unmethylated RNAs or RNAs shorter than 24 nucleotides. This chain is mRNA-decapping protein D9, found in Homo sapiens (Human).